A 240-amino-acid chain; its full sequence is Protein GUCD1 (240 aa).

The protein is Protein GUCD1 (GUCD1) of Homo sapiens (Human).